The primary structure comprises 89 residues: Small ribosomal subunit protein uS17 (89 aa).

It belongs to the universal ribosomal protein uS17 family. In terms of assembly, part of the 30S ribosomal subunit.

Functionally, one of the primary rRNA binding proteins, it binds specifically to the 5'-end of 16S ribosomal RNA. This chain is Small ribosomal subunit protein uS17, found in Acidovorax ebreus (strain TPSY) (Diaphorobacter sp. (strain TPSY)).